Here is a 262-residue protein sequence, read N- to C-terminus: Acyl-coenzyme A diphosphatase FITM2 (262 aa).

Topologically, residues 1–23 are cytoplasmic; the sequence is MEHLERCEWLLRGTLVRAAVRRY. Residues 24–44 traverse the membrane as a helical segment; that stretch reads LPWALVASMLAGSLLKELSPL. At 45-57 the chain is on the lumenal side; it reads PESYLSNKRNVLN. The chain crosses the membrane as a helical span at residues 58–78; the sequence is VYFVKVAWAWTFCLLLPFIAL. Over 79–93 the chain is Cytoplasmic; sequence TNYHLTGKAGLVLRR. A helical transmembrane segment spans residues 94–114; that stretch reads LSTLLVGTAIWYICTSIFSNI. Residues 115–145 are Lumenal-facing; sequence EHYTGSCYQSPALEGVRKEHQSKQQCHQEGG. Residues 146-166 form a helical membrane-spanning segment; it reads FWHGFDISGHSFLLTFCALMI. Histidine 155 is a catalytic residue. The Cytoplasmic segment spans residues 167–190; that stretch reads VEEMSVLHEVKTDRSHCLHTAITT. Residues 191-211 traverse the membrane as a helical segment; sequence LVVALGILTFIWVLMFLCTAV. At 212–218 the chain is on the lumenal side; the sequence is YFHNLSQ. The active site involves histidine 214. Residues 219-239 form a helical membrane-spanning segment; that stretch reads KVFGTLFGLLSWYGTYGFWYP. Topologically, residues 240–262 are cytoplasmic; it reads KAFSPGLPPQSCSLNLKQDSYKK.

Belongs to the FIT family. FIT2 subfamily. As to expression, widely expressed.

The protein localises to the endoplasmic reticulum membrane. It carries out the reaction an acyl-CoA + H2O = an acyl-4'-phosphopantetheine + adenosine 3',5'-bisphosphate + 2 H(+). The enzyme catalyses (9Z)-octadecenoyl-CoA + H2O = S-(9Z-octadecenoyl)-4'-phosphopantetheine + adenosine 3',5'-bisphosphate + 2 H(+). The catalysed reaction is (5Z,8Z,11Z,14Z)-eicosatetraenoyl-CoA + H2O = S-(5Z,8Z,11Z,14Z-eicosatetraenoyl)-4'-phosphopantetheine + adenosine 3',5'-bisphosphate + 2 H(+). It catalyses the reaction hexadecanoyl-CoA + H2O = S-hexadecanoyl-4'-phosphopantetheine + adenosine 3',5'-bisphosphate + 2 H(+). Functionally, fatty acyl-coenzyme A (CoA) diphosphatase that hydrolyzes fatty acyl-CoA to yield acyl-4'-phosphopantetheine and adenosine 3',5'-bisphosphate. Preferentially hydrolyzes unsaturated long-chain acyl-CoA substrates such as oleoyl-CoA/(9Z)-octadecenoyl-CoA and arachidonoyl-CoA/(5Z,8Z,11Z,14Z)-eicosatetraenoyl-CoA in the endoplasmic reticulum (ER) lumen. This catalytic activity is required for maintaining ER structure and for lipid droplets (LDs) biogenesis, which are lipid storage organelles involved in maintaining lipid and energy homeostasis. Directly binds to diacylglycerol (DAGs) and triacylglycerol, which is also important for LD biogenesis. May support directional budding of nacent LDs from the ER into the cytosol by reducing DAG levels at sites of LD formation. Plays a role in the regulation of cell morphology and cytoskeletal organization. This chain is Acyl-coenzyme A diphosphatase FITM2, found in Homo sapiens (Human).